We begin with the raw amino-acid sequence, 206 residues long: Probable nicotinate-nucleotide adenylyltransferase (206 aa).

This sequence belongs to the NadD family.

The enzyme catalyses nicotinate beta-D-ribonucleotide + ATP + H(+) = deamido-NAD(+) + diphosphate. Its pathway is cofactor biosynthesis; NAD(+) biosynthesis; deamido-NAD(+) from nicotinate D-ribonucleotide: step 1/1. Catalyzes the reversible adenylation of nicotinate mononucleotide (NaMN) to nicotinic acid adenine dinucleotide (NaAD). In Paenarthrobacter aurescens (strain TC1), this protein is Probable nicotinate-nucleotide adenylyltransferase.